A 622-amino-acid polypeptide reads, in one-letter code: Telomerase-associated protein of 75 kDa (622 aa).

In terms of assembly, component of the telomerase holoenzyme complex, composed of the catalytic core (the catalytic subunit TERT, the telomerase RNA template component TER and TAP65/p65), which is associated with two heterotrimeric subcomplexes: (i) the replication protein A (RPA)-related subcomplex, composed of TEB1, RPA2/TEB2 and RPA3/TEB3 and (ii) the CST-like subcomplex, composed of TAP75/p75, TAP45/p45 and TAP19/p19. TEB1 and the CST-like subcomplex are tethered to the catalytic core by TAP50/p50.

It localises to the chromosome. Its subcellular location is the telomere. Component of a CST-like subcomplex of the holoenzyme telomerase ribonucleoprotein complex, which stimulates telomerase complementary-strand synthesis. Telomerase is an essential ribonucleoprotein enzyme that copies new telomeric repeats onto chromosome ends by repetitively synthesizing the short telomere-repeat sequence 5'-TTGGGG-3' using an RNA template component TER. The CST-like subcomplex (also named 7-4-1) binds telomeric single-stranded DNA and coordinates telomere G-strand and C-strand synthesis. The sequence is that of Telomerase-associated protein of 75 kDa from Tetrahymena thermophila (strain SB210).